Reading from the N-terminus, the 279-residue chain is Proteasome subunit beta (279 aa).

Positions 1-56 (MASQAMSWRGEGERVVRDLAAASTSSFVEHLSQSRPDLLPFGQALPAGVLPQTPHA) are cleaved as a propeptide — removed in mature form; by autocatalysis. Threonine 57 (nucleophile) is an active-site residue.

The protein belongs to the peptidase T1B family. In terms of assembly, the 20S proteasome core is composed of 14 alpha and 14 beta subunits that assemble into four stacked heptameric rings, resulting in a barrel-shaped structure. The two inner rings, each composed of seven catalytic beta subunits, are sandwiched by two outer rings, each composed of seven alpha subunits. The catalytic chamber with the active sites is on the inside of the barrel. Has a gated structure, the ends of the cylinder being occluded by the N-termini of the alpha-subunits. Is capped by the proteasome-associated ATPase, ARC.

The protein localises to the cytoplasm. The catalysed reaction is Cleavage of peptide bonds with very broad specificity.. It participates in protein degradation; proteasomal Pup-dependent pathway. With respect to regulation, the formation of the proteasomal ATPase ARC-20S proteasome complex, likely via the docking of the C-termini of ARC into the intersubunit pockets in the alpha-rings, may trigger opening of the gate for substrate entry. Interconversion between the open-gate and close-gate conformations leads to a dynamic regulation of the 20S proteasome proteolysis activity. In terms of biological role, component of the proteasome core, a large protease complex with broad specificity involved in protein degradation. This chain is Proteasome subunit beta, found in Renibacterium salmoninarum (strain ATCC 33209 / DSM 20767 / JCM 11484 / NBRC 15589 / NCIMB 2235).